The sequence spans 466 residues: Ribosome biogenesis protein YTM1 (466 aa).

The tract at residues 8–95 (IKINFFTNEE…EASLNLEYTR (88 aa)) is ubiquitin-like (UBL) domain. Residues 105-466 (SFNNDDWISS…QINKGSDITK (362 aa)) form a sufficient for interaction with ERB1 and association with 66S pre-ribosomes region. WD repeat units follow at residues 120-159 (PLSA…EKQY), 161-199 (GHSG…NIED), 214-253 (GHKA…MTTI), 291-331 (GHSQ…CVDT), 333-372 (TTGY…TTTE), 381-421 (GHTN…SLYT), and 431-466 (KGQD…DITK).

Belongs to the WD repeat WDR12/YTM1 family. In terms of assembly, component of the NOP7 complex, composed of ERB1, NOP7 and YTM1. The complex is held together by ERB1, which interacts with NOP7 via its N-terminal domain and with YTM1 via a high-affinity interaction between the seven-bladed beta-propeller domains of the 2 proteins. The NOP7 complex associates with the 66S pre-ribosome. Interacts (via UBL domain) with MDN1 (via VWFA/MIDAS domain).

It localises to the nucleus. The protein localises to the nucleolus. It is found in the nucleoplasm. Its function is as follows. Component of the NOP7 complex, which is required for maturation of the 25S and 5.8S ribosomal RNAs and formation of the 60S ribosome. This Debaryomyces hansenii (strain ATCC 36239 / CBS 767 / BCRC 21394 / JCM 1990 / NBRC 0083 / IGC 2968) (Yeast) protein is Ribosome biogenesis protein YTM1.